A 1199-amino-acid polypeptide reads, in one-letter code: Pyruvate-flavodoxin oxidoreductase (1199 aa).

4Fe-4S ferredoxin-type domains lie at Glu699–Tyr728 and Phe755–Leu784. Residues Cys708, Cys711, Cys714, Cys718, Cys764, Cys767, Cys770, Cys774, Cys838, Cys841, Cys866, and Cys1103 each contribute to the [4Fe-4S] cluster site.

This sequence belongs to the pyruvate:ferredoxin/flavodoxin oxidoreductase family. Requires [4Fe-4S] cluster as cofactor.

It carries out the reaction oxidized [flavodoxin] + pyruvate + CoA + 2 H(+) = reduced [flavodoxin] + acetyl-CoA + CO2. In terms of biological role, oxidoreductase required for the transfer of electrons from pyruvate to flavodoxin, which reduces nitrogenase. The sequence is that of Pyruvate-flavodoxin oxidoreductase (nifJ) from Nostoc sp. (strain PCC 7120 / SAG 25.82 / UTEX 2576).